The chain runs to 152 residues: Lipoprotein signal peptidase (152 aa).

The next 3 membrane-spanning stretches (helical) occupy residues 5 to 25 (LFVLSLILLVALDQLSKFWIV), 61 to 81 (WFFVVITVLVIGYAIYYLATH), and 84 to 104 (LNIWKQLALLLIISGGIGNFI). Active-site residues include D114 and D130. The helical transmembrane segment at 125 to 145 (IFNVADSYLTVGVILLVICLW) threads the bilayer.

It belongs to the peptidase A8 family.

The protein localises to the cell membrane. It catalyses the reaction Release of signal peptides from bacterial membrane prolipoproteins. Hydrolyzes -Xaa-Yaa-Zaa-|-(S,diacylglyceryl)Cys-, in which Xaa is hydrophobic (preferably Leu), and Yaa (Ala or Ser) and Zaa (Gly or Ala) have small, neutral side chains.. It functions in the pathway protein modification; lipoprotein biosynthesis (signal peptide cleavage). Functionally, this protein specifically catalyzes the removal of signal peptides from prolipoproteins. This Streptococcus pyogenes serotype M3 (strain ATCC BAA-595 / MGAS315) protein is Lipoprotein signal peptidase.